Reading from the N-terminus, the 255-residue chain is MAFSLCWKAPRSPWSFLQAVNNGSPLFLWRTVGSCLDPKMKAYLEENTEVTSSGSLTPEIQLRLLTPRCKFWWERADLWPYSDPYWAIYWPGGQALSRYLLDNPAVVRGKSVLDLGSGCGATAIAAKMSGASKILANDIDPIAGMAITLNCKLNGLNPFPVLTKNILNTQQGKFDLIVLGDMFYDEDLADSLHLWLQNYFWTHGTRVLIGDPGRPQFSGHSIRHQLYQLVEYTLPEPTQQENNGLTTSAVWDFHP.

Residues 1-32 constitute a mitochondrion transit peptide; the sequence is MAFSLCWKAPRSPWSFLQAVNNGSPLFLWRTV.

This sequence belongs to the methyltransferase superfamily. ETFBKMT family. In terms of assembly, interacts with HSPD1; this protein may possibly be a methylation substrate.

Its subcellular location is the cytoplasm. The protein resides in the mitochondrion matrix. It catalyses the reaction L-lysyl-[protein] + 3 S-adenosyl-L-methionine = N(6),N(6),N(6)-trimethyl-L-lysyl-[protein] + 3 S-adenosyl-L-homocysteine + 3 H(+). In terms of biological role, protein-lysine methyltransferase that selectively trimethylates the flavoprotein ETFB in mitochondria. Thereby, may negatively regulate the function of ETFB in electron transfer from Acyl-CoA dehydrogenases. The sequence is that of Electron transfer flavoprotein beta subunit lysine methyltransferase from Mus musculus (Mouse).